We begin with the raw amino-acid sequence, 346 residues long: Nucleoplasmin-like protein ANO39 (346 aa).

Position 2 is an N-acetylserine (Ser-2). N-linked (GlcNAc...) asparagine glycosylation occurs at Asn-85. Acidic residues predominate over residues 123 to 141 (DEEELEEDDEEEEEEDEVE). The interval 123–285 (DEEELEEDDE…KAKAKTDTKL (163 aa)) is disordered. Phosphoserine; by CDC2 is present on Ser-145. Basic and acidic residues predominate over residues 171–180 (AKLDKDADKK). Over residues 181-247 (EDDDEEEDDE…EEEEDEDEES (67 aa)) the composition is skewed to acidic residues. Residue Asn-264 is glycosylated (N-linked (GlcNAc...) asparagine). Positions 271–285 (GDNKPKAKAKTDTKL) are enriched in basic and acidic residues.

Belongs to the nucleoplasmin family. In terms of processing, phosphorylation occurs in oocytes during the progression of the first meiotic M phase. No phosphorylation is observed in immature oocytes. In terms of tissue distribution, expressed specifically in the oocytes of the ovaries.

Its subcellular location is the nucleus. The protein resides in the nucleolus. It localises to the cytoplasm. In terms of biological role, binds double-stranded RNA and both single-stranded and double-stranded DNA. This chain is Nucleoplasmin-like protein ANO39, found in Patiria pectinifera (Starfish).